A 275-amino-acid chain; its full sequence is Large ribosomal subunit protein uL2 (275 aa).

Positions Ala208–Lys275 are disordered. Composition is skewed to basic residues over residues Gly209–Thr219 and Lys254–Arg263.

The protein belongs to the universal ribosomal protein uL2 family. Part of the 50S ribosomal subunit. Forms a bridge to the 30S subunit in the 70S ribosome.

In terms of biological role, one of the primary rRNA binding proteins. Required for association of the 30S and 50S subunits to form the 70S ribosome, for tRNA binding and peptide bond formation. It has been suggested to have peptidyltransferase activity; this is somewhat controversial. Makes several contacts with the 16S rRNA in the 70S ribosome. In Coxiella burnetii (strain CbuG_Q212) (Coxiella burnetii (strain Q212)), this protein is Large ribosomal subunit protein uL2.